A 243-amino-acid polypeptide reads, in one-letter code: Segregation and condensation protein A (243 aa).

This sequence belongs to the ScpA family. Component of a cohesin-like complex composed of ScpA, ScpB and the Smc homodimer, in which ScpA and ScpB bind to the head domain of Smc. The presence of the three proteins is required for the association of the complex with DNA.

Its subcellular location is the cytoplasm. Participates in chromosomal partition during cell division. May act via the formation of a condensin-like complex containing Smc and ScpB that pull DNA away from mid-cell into both cell halves. In Halothermothrix orenii (strain H 168 / OCM 544 / DSM 9562), this protein is Segregation and condensation protein A.